The chain runs to 584 residues: Sperm-associated microtubule inner protein 4 (584 aa).

Its subcellular location is the cytoplasm. It localises to the cytoskeleton. It is found in the microtubule organizing center. The protein resides in the centrosome. The protein localises to the flagellum axoneme. Microtubule inner protein (MIP) part of the dynein-decorated doublet microtubules (DMTs) in flagellum axoneme. May serve to reinforce and thus stabilize the microtubule structure in the sperm flagella. This is Sperm-associated microtubule inner protein 4 (SPMIP4) from Bos taurus (Bovine).